The following is a 192-amino-acid chain: MLITVSGPPGSGKSTNAAGLADRLGLDHVSGGDIFREMAAERDMTPVEFNEFAEEDPQIDRDLDRRLHEIATTRDDLVLESRLAGWLSADHADFRFWFDAPVSTRAERIAEREEKPVDRAKAETERREASEKKRYREYYDIDIGDLSIYDAAYNTARWGPERFIDVLVATIDAYDPATDEGKAPIEGVSYDF.

7–15 (GPPGSGKST) is a binding site for ATP.

It belongs to the cytidylate kinase family. Type 2 subfamily.

The protein resides in the cytoplasm. It carries out the reaction CMP + ATP = CDP + ADP. It catalyses the reaction dCMP + ATP = dCDP + ADP. The protein is Cytidylate kinase of Halorubrum lacusprofundi (strain ATCC 49239 / DSM 5036 / JCM 8891 / ACAM 34).